The primary structure comprises 434 residues: 4-hydroxy-3-methylbut-2-en-1-yl diphosphate synthase (flavodoxin) (434 aa).

Positions 1–15 (MQSEAQSPRSSQICS) are enriched in polar residues. Positions 1–20 (MQSEAQSPRSSQICSTEPVF) are disordered. Positions 322, 325, 368, and 375 each coordinate [4Fe-4S] cluster.

The protein belongs to the IspG family. The cofactor is [4Fe-4S] cluster.

It carries out the reaction (2E)-4-hydroxy-3-methylbut-2-enyl diphosphate + oxidized [flavodoxin] + H2O + 2 H(+) = 2-C-methyl-D-erythritol 2,4-cyclic diphosphate + reduced [flavodoxin]. The protein operates within isoprenoid biosynthesis; isopentenyl diphosphate biosynthesis via DXP pathway; isopentenyl diphosphate from 1-deoxy-D-xylulose 5-phosphate: step 5/6. Converts 2C-methyl-D-erythritol 2,4-cyclodiphosphate (ME-2,4cPP) into 1-hydroxy-2-methyl-2-(E)-butenyl 4-diphosphate. The chain is 4-hydroxy-3-methylbut-2-en-1-yl diphosphate synthase (flavodoxin) from Burkholderia mallei (strain ATCC 23344).